Consider the following 274-residue polypeptide: NAD(P)H dehydrogenase [quinone] 1 (274 aa).

Residues H12, 18–19, and Q67 each bind FAD; that span reads FN. Residue S82 is modified to Phosphoserine. 104–107 is an FAD binding site; sequence LQWF. 126 to 128 contributes to the substrate binding site; that stretch reads AYT. Residues 148 to 151, Y156, and R201 contribute to the FAD site; that span reads TTGG. Positions 225–274 are important for apoenzyme conformational stability; it reads PSSLFDLNFQAGFLMKKEVQDEEKNKKFGLSVGHHLGKSIPTDNQIKARK. Glycyl lysine isopeptide (Lys-Gly) (interchain with G-Cter in SUMO2) cross-links involve residues K250 and K251.

It belongs to the NAD(P)H dehydrogenase (quinone) family. As to quaternary structure, homodimer. Interacts with PDLIM4 isoform 2; this interaction stabilizes PDLIM4 isoform 2 in response to oxidative stress and protects it from ubiquitin-independent degradation by the core 20S proteasome. Interacts with TP73 (via SAM domain); this interaction is NADH-dependent, stabilizes TP73 in response to oxidative stress and protects it from ubiquitin-independent degradation by the 20S proteasome. Interacts with TP53; this interaction is NADH-dependent, stabilizes TP53 in response to oxidative stress and protects it from ubiquitin-independent degradation by the 20S proteasome. It depends on FAD as a cofactor.

It is found in the cytoplasm. The protein resides in the cytosol. It catalyses the reaction a quinone + NADH + H(+) = a quinol + NAD(+). It carries out the reaction a quinone + NADPH + H(+) = a quinol + NADP(+). The enzyme catalyses ubiquinone-10 + NADH + H(+) = ubiquinol-10 + NAD(+). The catalysed reaction is menadione + NADH + H(+) = menadiol + NAD(+). Inhibited by dicoumarol. Functionally, flavin-containing quinone reductase that catalyzes two-electron reduction of quinones to hydroquinones using either NADH or NADPH as electron donors. In a ping-pong kinetic mechanism, the electrons are sequentially transferred from NAD(P)H to flavin cofactor and then from reduced flavin to the quinone, bypassing the formation of semiquinone and reactive oxygen species. Regulates cellular redox state primarily through quinone detoxification. Reduces components of plasma membrane redox system such as coenzyme Q and vitamin quinones, producing antioxidant hydroquinone forms. In the process may function as superoxide scavenger to prevent hydroquinone oxidation and facilitate excretion. Alternatively, can activate quinones and their derivatives by generating redox reactive hydroquinones with DNA cross-linking antitumor potential. Acts as a gatekeeper of the core 20S proteasome known to degrade proteins with unstructured regions. Upon oxidative stress, interacts with tumor suppressors TP53 and TP73 in a NADH-dependent way and inhibits their ubiquitin-independent degradation by the 20S proteasome. This Homo sapiens (Human) protein is NAD(P)H dehydrogenase [quinone] 1.